Here is a 543-residue protein sequence, read N- to C-terminus: Putative cysteine ligase BshC (543 aa).

Positions 419-440 (DEKNNDNIDEVVEEVKAQISDI) form a coiled coil.

The protein belongs to the BshC family.

Functionally, involved in bacillithiol (BSH) biosynthesis. May catalyze the last step of the pathway, the addition of cysteine to glucosamine malate (GlcN-Mal) to generate BSH. This chain is Putative cysteine ligase BshC, found in Oceanobacillus iheyensis (strain DSM 14371 / CIP 107618 / JCM 11309 / KCTC 3954 / HTE831).